Reading from the N-terminus, the 98-residue chain is Small ribosomal subunit protein uS17 (98 aa).

It belongs to the universal ribosomal protein uS17 family. In terms of assembly, part of the 30S ribosomal subunit.

Its function is as follows. One of the primary rRNA binding proteins, it binds specifically to the 5'-end of 16S ribosomal RNA. This Carboxydothermus hydrogenoformans (strain ATCC BAA-161 / DSM 6008 / Z-2901) protein is Small ribosomal subunit protein uS17.